A 456-amino-acid chain; its full sequence is 3-isopropylmalate dehydratase large subunit (456 aa).

Residues Cys-336, Cys-396, and Cys-399 each contribute to the [4Fe-4S] cluster site.

It belongs to the aconitase/IPM isomerase family. LeuC type 1 subfamily. In terms of assembly, heterodimer of LeuC and LeuD. [4Fe-4S] cluster is required as a cofactor.

It carries out the reaction (2R,3S)-3-isopropylmalate = (2S)-2-isopropylmalate. The protein operates within amino-acid biosynthesis; L-leucine biosynthesis; L-leucine from 3-methyl-2-oxobutanoate: step 2/4. In terms of biological role, catalyzes the isomerization between 2-isopropylmalate and 3-isopropylmalate, via the formation of 2-isopropylmaleate. This chain is 3-isopropylmalate dehydratase large subunit, found in Staphylococcus epidermidis (strain ATCC 35984 / DSM 28319 / BCRC 17069 / CCUG 31568 / BM 3577 / RP62A).